The primary structure comprises 294 residues: Thymidylate synthase (294 aa).

Residues Arg31 and 156–157 (RR) each bind dUMP. The Nucleophile role is filled by Cys176. DUMP-binding positions include 196-199 (RSAD), Asn207, and 237-239 (HIY). Asp199 is a binding site for (6R)-5,10-methylene-5,6,7,8-tetrahydrofolate. Residue Ala293 participates in (6R)-5,10-methylene-5,6,7,8-tetrahydrofolate binding.

Belongs to the thymidylate synthase family. As to quaternary structure, homodimer.

It catalyses the reaction dUMP + (6R)-5,10-methylene-5,6,7,8-tetrahydrofolate = 7,8-dihydrofolate + dTMP. It participates in pyrimidine metabolism; dTTP biosynthesis. This Saimiri sciureus (Common squirrel monkey) protein is Thymidylate synthase (70).